A 480-amino-acid polypeptide reads, in one-letter code: tRNA modification GTPase MnmE (480 aa).

(6S)-5-formyl-5,6,7,8-tetrahydrofolate-binding residues include arginine 20, glutamate 114, and lysine 154. One can recognise a TrmE-type G domain in the interval 250-406 (GLKLAIIGPP…ILKNIENIAE (157 aa)). Asparagine 260 is a K(+) binding site. GTP is bound by residues 260 to 265 (NVGKSS), 279 to 285 (SNIAGTT), and 304 to 307 (DTAG). Serine 264 contributes to the Mg(2+) binding site. 3 residues coordinate K(+): serine 279, isoleucine 281, and threonine 284. Threonine 285 provides a ligand contact to Mg(2+). Residue lysine 480 coordinates (6S)-5-formyl-5,6,7,8-tetrahydrofolate.

The protein belongs to the TRAFAC class TrmE-Era-EngA-EngB-Septin-like GTPase superfamily. TrmE GTPase family. In terms of assembly, homodimer. Heterotetramer of two MnmE and two MnmG subunits. It depends on K(+) as a cofactor.

The protein resides in the cytoplasm. Its function is as follows. Exhibits a very high intrinsic GTPase hydrolysis rate. Involved in the addition of a carboxymethylaminomethyl (cmnm) group at the wobble position (U34) of certain tRNAs, forming tRNA-cmnm(5)s(2)U34. The chain is tRNA modification GTPase MnmE from Rickettsia felis (strain ATCC VR-1525 / URRWXCal2) (Rickettsia azadi).